Here is an 807-residue protein sequence, read N- to C-terminus: MSEQGGLTPTILEEGQTEPESAPENGILKSESLDEEEKLELQRRLAAQNQERRKSKSGAGKGKLTRSLAVCEESSARSGGESHQDQESIHLQLSSFPSLQEEDKSRKDDSEREKEKDKNREKLSERPKIRMLSKDCSQEYTDSTGIDLHGFLINTLKNNSRDRMILLKMEQEMIDFIADSNNHYKKFPQMSSYQRMLVHRVAAYFGLDHNVDQTGKSVIINKTSSTRIPEQRFCEHLKDEKSEESQKRFILKRDNSSIDKEDNQNRMHPFRDDRRSKSIEEREEEYQRVRERIFAHDSVCSQESLFLDNSRLQEDMHICNETYKKRQLFRAHRDSSGRTSGSRQSSSETELRWPDHQRAWSSTDSDSSNRNLKPTMTKTASFGGITVLTRGDSTSSTRSAGKLSKTGSESSSSAGSSGSLSRTHPQSTALTSSVAAGSPGCMAYSENGMGGQVPPSSTSYILLPLESATGIPPGSILLNPHTGQPFVNPDGTPAIYNPPGSQQTLRGTVGGQPQQPPQQQPSPQPQQQVQASQPQMAGPLVTQREELAAQFSQLSMSRQSSGDTPEPPSGTVYPASLLPQTAQPQSYVITSAGQQLSTGGFSDSGPPISQQVLQAPPSPQGFVQQPPPAQMSVYYYPSGQYPTSTSQQYRPLASVQYSAQRSQQIPQTTQQAGYQPVLSGQQGFQGMMGVQQSAHSQGVMSSQQGAPVHGVMVSYPTMSSYQVPMTQGSQAVPQQTYQPPIMLPSQAGQGSLPATGMPVYCNVTPPNPQNNLRLMGPHCPSSTVPVMSASCRTNCGNVSNAGWQVKF.

The segment at 1-127 (MSEQGGLTPT…KNREKLSERP (127 aa)) is disordered. Residue Ser2 is modified to N-acetylserine. Ser32 is modified (phosphoserine). A coiled-coil region spans residues 32 to 57 (SLDEEEKLELQRRLAAQNQERRKSKS). Phosphoserine; by PKA is present on Ser55. The segment covering 89–98 (IHLQLSSFPS) has biased composition (polar residues). Basic and acidic residues predominate over residues 101-127 (EEDKSRKDDSEREKEKDKNREKLSERP). Ser133 bears the Phosphoserine mark. An R3H domain is found at 163–226 (RMILLKMEQE…SVIINKTSST (64 aa)). In terms of domain architecture, SUZ spans 227–298 (RIPEQRFCEH…VRERIFAHDS (72 aa)). The tract at residues 245 to 282 (SQKRFILKRDNSSIDKEDNQNRMHPFRDDRRSKSIEER) is disordered. Phosphoserine occurs at positions 265 and 298. 4 disordered regions span residues 328 to 434 (LFRA…TSSV), 474 to 536 (GSIL…QPQM), 552 to 576 (SQLS…YPAS), and 595 to 627 (QLST…QQPP). The segment covering 337–348 (GRTSGSRQSSSE) has biased composition (low complexity). Residues 349-358 (TELRWPDHQR) are compositionally biased toward basic and acidic residues. The segment covering 359-380 (AWSSTDSDSSNRNLKPTMTKTA) has biased composition (polar residues). Ser361 and Ser381 each carry phosphoserine. The segment covering 401-421 (GKLSKTGSESSSSAGSSGSLS) has biased composition (low complexity). The span at 422-434 (RTHPQSTALTSSV) shows a compositional bias: polar residues. Residues 514 to 524 (QQPPQQQPSPQ) show a composition bias toward pro residues. Residues 525–535 (PQQQVQASQPQ) show a composition bias toward low complexity. Composition is skewed to polar residues over residues 552–563 (SQLSMSRQSSGD) and 595–613 (QLST…QQVL). Ser557 bears the Phosphoserine mark. Arg650 bears the Asymmetric dimethylarginine mark.

As to quaternary structure, interacts with CALM1. Post-translationally, phosphorylation of isoform 2 at Ser-55 is enhanced upon dopamine D1 receptor activation and favors interaction with CALM1. In terms of processing, methylated by CARM1 at Arg-650 in immature thymocytes. In terms of tissue distribution, present at high levels in thymus and low levels in brain. In thymus, isoform 1 is specifically found in immature thymocytes (at protein level).

The protein resides in the cytoplasm. In terms of biological role, may act as a competitive inhibitor of calmodulin-dependent enzymes such as calcineurin in neurons. The chain is cAMP-regulated phosphoprotein 21 (Arpp21) from Mus musculus (Mouse).